Here is an 893-residue protein sequence, read N- to C-terminus: Exocyst complex component 4 (893 aa).

Residues 1–27 form a disordered region; sequence MNENGATPVAAARRHRPLPAERATSNS.

It belongs to the SEC8 family. In terms of assembly, the exocyst complex is composed of sec-3/exoc1, sec-5/exoc2, sec-6/exoc3, sec-8/exoc4, sec-10/exoc5, sec-15/exoc6, exo-70/exoc7 and exo-84/exoc8. As to expression, pseudocoelom.

Component of the exocyst complex involved in the docking of exocytic vesicles with fusion sites on the plasma membrane. The polypeptide is Exocyst complex component 4 (sec-8) (Caenorhabditis elegans).